A 399-amino-acid chain; its full sequence is UDP-N-acetylglucosamine--N-acetylmuramyl-(pentapeptide) pyrophosphoryl-undecaprenol N-acetylglucosamine transferase (399 aa).

The span at 1 to 21 shows a compositional bias: basic residues; that stretch reads MTSRFGHSHHPRRGRSARARA. Residues 1–30 form a disordered region; it reads MTSRFGHSHHPRRGRSARARAGRREGVQSN. UDP-N-acetyl-alpha-D-glucosamine-binding positions include 58 to 60, Asn-170, Arg-206, Ser-234, Ile-288, and Gln-333; that span reads TGG.

The protein belongs to the glycosyltransferase 28 family. MurG subfamily.

It is found in the cell inner membrane. It carries out the reaction di-trans,octa-cis-undecaprenyl diphospho-N-acetyl-alpha-D-muramoyl-L-alanyl-D-glutamyl-meso-2,6-diaminopimeloyl-D-alanyl-D-alanine + UDP-N-acetyl-alpha-D-glucosamine = di-trans,octa-cis-undecaprenyl diphospho-[N-acetyl-alpha-D-glucosaminyl-(1-&gt;4)]-N-acetyl-alpha-D-muramoyl-L-alanyl-D-glutamyl-meso-2,6-diaminopimeloyl-D-alanyl-D-alanine + UDP + H(+). The protein operates within cell wall biogenesis; peptidoglycan biosynthesis. In terms of biological role, cell wall formation. Catalyzes the transfer of a GlcNAc subunit on undecaprenyl-pyrophosphoryl-MurNAc-pentapeptide (lipid intermediate I) to form undecaprenyl-pyrophosphoryl-MurNAc-(pentapeptide)GlcNAc (lipid intermediate II). This chain is UDP-N-acetylglucosamine--N-acetylmuramyl-(pentapeptide) pyrophosphoryl-undecaprenol N-acetylglucosamine transferase, found in Acidovorax ebreus (strain TPSY) (Diaphorobacter sp. (strain TPSY)).